A 368-amino-acid polypeptide reads, in one-letter code: Histidinol-phosphate aminotransferase (368 aa).

Residue Lys223 is modified to N6-(pyridoxal phosphate)lysine.

This sequence belongs to the class-II pyridoxal-phosphate-dependent aminotransferase family. Histidinol-phosphate aminotransferase subfamily. In terms of assembly, homodimer. Requires pyridoxal 5'-phosphate as cofactor.

It catalyses the reaction L-histidinol phosphate + 2-oxoglutarate = 3-(imidazol-4-yl)-2-oxopropyl phosphate + L-glutamate. The protein operates within amino-acid biosynthesis; L-histidine biosynthesis; L-histidine from 5-phospho-alpha-D-ribose 1-diphosphate: step 7/9. This is Histidinol-phosphate aminotransferase (hisC) from Sinorhizobium fredii (strain NBRC 101917 / NGR234).